The following is a 297-amino-acid chain: Carbamate kinase (297 aa).

It belongs to the carbamate kinase family.

It is found in the cytoplasm. The enzyme catalyses hydrogencarbonate + NH4(+) + ATP = carbamoyl phosphate + ADP + H2O + H(+). It carries out the reaction carbamate + ATP = carbamoyl phosphate + ADP. The catalysed reaction is hydrogencarbonate + NH4(+) = carbamate + H2O + H(+). The protein operates within nitrogen metabolism; (S)-allantoin degradation. In terms of biological role, kinase involved in the anaerobic nitrogen utilization via the assimilation of allantoin. Catalyzes the transfer of a phosphate group from carbamoyl phosphate to ADP to produce ATP and leave carbamate, which spontaneously hydrolyzes to ammonia and hydrogencarbonate. The polypeptide is Carbamate kinase (Escherichia coli O157:H7).